Consider the following 176-residue polypeptide: Crossover junction endodeoxyribonuclease RuvC (176 aa).

Active-site residues include Asp-10, Glu-69, and Asp-141. Mg(2+) contacts are provided by Asp-10, Glu-69, and Asp-141.

Belongs to the RuvC family. Homodimer which binds Holliday junction (HJ) DNA. The HJ becomes 2-fold symmetrical on binding to RuvC with unstacked arms; it has a different conformation from HJ DNA in complex with RuvA. In the full resolvosome a probable DNA-RuvA(4)-RuvB(12)-RuvC(2) complex forms which resolves the HJ. Requires Mg(2+) as cofactor.

It localises to the cytoplasm. It carries out the reaction Endonucleolytic cleavage at a junction such as a reciprocal single-stranded crossover between two homologous DNA duplexes (Holliday junction).. The RuvA-RuvB-RuvC complex processes Holliday junction (HJ) DNA during genetic recombination and DNA repair. Endonuclease that resolves HJ intermediates. Cleaves cruciform DNA by making single-stranded nicks across the HJ at symmetrical positions within the homologous arms, yielding a 5'-phosphate and a 3'-hydroxyl group; requires a central core of homology in the junction. The consensus cleavage sequence is 5'-(A/T)TT(C/G)-3'. Cleavage occurs on the 3'-side of the TT dinucleotide at the point of strand exchange. HJ branch migration catalyzed by RuvA-RuvB allows RuvC to scan DNA until it finds its consensus sequence, where it cleaves and resolves the cruciform DNA. The polypeptide is Crossover junction endodeoxyribonuclease RuvC (Dichelobacter nodosus (strain VCS1703A)).